The chain runs to 65 residues: Weak neurotoxin 8 (65 aa).

5 disulfide bridges follow: cysteine 3-cysteine 24, cysteine 6-cysteine 11, cysteine 17-cysteine 42, cysteine 46-cysteine 57, and cysteine 58-cysteine 63.

The protein belongs to the three-finger toxin family. Ancestral subfamily. Orphan group II sub-subfamily. As to expression, expressed by the venom gland.

Its subcellular location is the secreted. Binds with low affinity to muscular (alpha-1-beta-1-delta-epsilon/CHRNA1-CHRNB1-CHRND-CHRNE) and very low affinity to neuronal (alpha-7/CHRNA7) nicotinic acetylcholine receptor (nAChR). The polypeptide is Weak neurotoxin 8 (Naja naja (Indian cobra)).